The chain runs to 261 residues: NAD-capped RNA hydrolase NudC (261 aa).

Residues Lys25 and Arg69 each coordinate substrate. 2 residues coordinate Zn(2+): Cys98 and Cys101. Position 111 (Glu111) interacts with substrate. Residues Cys116 and Cys119 each contribute to the Zn(2+) site. Tyr124 serves as a coordination point for substrate. The Nudix hydrolase domain occupies 125–248; it reads PQIAPCVIVA…TVARRLIEDT (124 aa). A divalent metal cation is bound by residues Ala158, Glu174, and Glu178. Positions 159–180 match the Nudix box motif; the sequence is GFVEVGETLEQAVSREVLEESN. 192–199 contributes to the substrate binding site; the sequence is QPWPFPHS. An a divalent metal cation-binding site is contributed by Glu219. Ala241 lines the substrate pocket.

Belongs to the Nudix hydrolase family. NudC subfamily. Homodimer. Mg(2+) is required as a cofactor. It depends on Mn(2+) as a cofactor. Requires Zn(2+) as cofactor.

It catalyses the reaction a 5'-end NAD(+)-phospho-ribonucleoside in mRNA + H2O = a 5'-end phospho-adenosine-phospho-ribonucleoside in mRNA + beta-nicotinamide D-ribonucleotide + 2 H(+). The catalysed reaction is NAD(+) + H2O = beta-nicotinamide D-ribonucleotide + AMP + 2 H(+). The enzyme catalyses NADH + H2O = reduced beta-nicotinamide D-ribonucleotide + AMP + 2 H(+). MRNA decapping enzyme that specifically removes the nicotinamide adenine dinucleotide (NAD) cap from a subset of mRNAs by hydrolyzing the diphosphate linkage to produce nicotinamide mononucleotide (NMN) and 5' monophosphate mRNA. The NAD-cap is present at the 5'-end of some mRNAs and stabilizes RNA against 5'-processing. Has preference for mRNAs with a 5'-end purine. Catalyzes the hydrolysis of a broad range of dinucleotide pyrophosphates. This Yersinia enterocolitica serotype O:8 / biotype 1B (strain NCTC 13174 / 8081) protein is NAD-capped RNA hydrolase NudC.